Here is a 252-residue protein sequence, read N- to C-terminus: MNVKVYNLDGSEKGAIELPSVFETEYRPDVIKRAVISSLTARLQPKGSDPLAGYRTSAKSIGKGHGKARVRRTAQGAGAFVPQAVGGRRAHPPKVEKILFERINRKERLKALASAIAASANSEIVAARGHKIEGVPSLPLVVNAEFESLVKTKEVLSVFKALKLEADLERAKDGIKIKAGRAKLRGRKYKKPRSVLVVVGDACDAVAASRNLAGVDVITANDLSAIHIAPGTMAGRLTLWTENAIEKLKERF.

Belongs to the universal ribosomal protein uL4 family. In terms of assembly, part of the 50S ribosomal subunit.

Functionally, one of the primary rRNA binding proteins, this protein initially binds near the 5'-end of the 23S rRNA. It is important during the early stages of 50S assembly. It makes multiple contacts with different domains of the 23S rRNA in the assembled 50S subunit and ribosome. Its function is as follows. Forms part of the polypeptide exit tunnel. The chain is Large ribosomal subunit protein uL4 from Methanococcus vannielii (strain ATCC 35089 / DSM 1224 / JCM 13029 / OCM 148 / SB).